Reading from the N-terminus, the 188-residue chain is Elongation factor P-like protein (188 aa).

The protein belongs to the elongation factor P family.

The chain is Elongation factor P-like protein from Xanthomonas oryzae pv. oryzae (strain MAFF 311018).